Consider the following 335-residue polypeptide: Mevalonate kinase (335 aa).

Position 111–121 (P111–A121) interacts with ATP. The active-site Proton acceptor is D162.

It belongs to the GHMP kinase family. Mevalonate kinase subfamily. As to quaternary structure, homodimer. Requires Mg(2+) as cofactor.

It localises to the cytoplasm. It catalyses the reaction (R)-mevalonate + ATP = (R)-5-phosphomevalonate + ADP + H(+). It functions in the pathway isoprenoid biosynthesis; isopentenyl diphosphate biosynthesis via mevalonate pathway; isopentenyl diphosphate from (R)-mevalonate: step 1/3. Catalyzes the phosphorylation of (R)-mevalonate (MVA) to (R)-mevalonate 5-phosphate (MVAP). Functions in the mevalonate (MVA) pathway leading to isopentenyl diphosphate (IPP), a key precursor for the biosynthesis of isoprenoid compounds such as archaeal membrane lipids. The sequence is that of Mevalonate kinase from Pyrococcus horikoshii (strain ATCC 700860 / DSM 12428 / JCM 9974 / NBRC 100139 / OT-3).